A 394-amino-acid chain; its full sequence is uncharacterized protein (394 aa).

2 helical membrane passes run 31-51 (LAIL…LSGL) and 57-77 (LIIA…SLLI).

It belongs to the chlamydial CPn_0129/CT_036/TC_0306 family.

The protein localises to the cell membrane. This is an uncharacterized protein from Chlamydia pneumoniae (Chlamydophila pneumoniae).